The sequence spans 158 residues: NAD(P)H-quinone oxidoreductase subunit O, chloroplastic (158 aa).

The N-terminal 38 residues, 1–38 (MAFSATVSQLSSLSTISSSLPISSRRLPHRSLPQFTVK), are a transit peptide targeting the chloroplast. The tract at residues 33-70 (PQFTVKAEAEKEKQSTQGKSDGEASPAATKTPKTLPKK) is disordered. Low complexity predominate over residues 56–70 (ASPAATKTPKTLPKK).

It belongs to the NDH complex subunit O family. Part of the chloroplast NDH complex, composed of a mixture of chloroplast and nucleus encoded subunits. Component of the NDH subcomplex A, at least composed of ndhH, ndhI, ndhJ, ndhK, ndhL, ndhM, ndhN and ndhO.

Its subcellular location is the plastid. It localises to the chloroplast thylakoid membrane. It carries out the reaction a plastoquinone + NADH + (n+1) H(+)(in) = a plastoquinol + NAD(+) + n H(+)(out). The catalysed reaction is a plastoquinone + NADPH + (n+1) H(+)(in) = a plastoquinol + NADP(+) + n H(+)(out). Its function is as follows. NDH shuttles electrons from NAD(P)H:plastoquinone, via FMN and iron-sulfur (Fe-S) centers, to quinones in the photosynthetic chain and possibly in a chloroplast respiratory chain. The immediate electron acceptor for the enzyme in this species is believed to be plastoquinone. Couples the redox reaction to proton translocation, and thus conserves the redox energy in a proton gradient. The chain is NAD(P)H-quinone oxidoreductase subunit O, chloroplastic from Arabidopsis thaliana (Mouse-ear cress).